A 352-amino-acid polypeptide reads, in one-letter code: UDP-N-acetylglucosamine--N-acetylmuramyl-(pentapeptide) pyrophosphoryl-undecaprenol N-acetylglucosamine transferase (352 aa).

UDP-N-acetyl-alpha-D-glucosamine contacts are provided by residues 14-16, asparagine 124, arginine 164, serine 185, and glutamine 285; that span reads TGG.

The protein belongs to the glycosyltransferase 28 family. MurG subfamily.

The protein localises to the cell inner membrane. The enzyme catalyses di-trans,octa-cis-undecaprenyl diphospho-N-acetyl-alpha-D-muramoyl-L-alanyl-D-glutamyl-meso-2,6-diaminopimeloyl-D-alanyl-D-alanine + UDP-N-acetyl-alpha-D-glucosamine = di-trans,octa-cis-undecaprenyl diphospho-[N-acetyl-alpha-D-glucosaminyl-(1-&gt;4)]-N-acetyl-alpha-D-muramoyl-L-alanyl-D-glutamyl-meso-2,6-diaminopimeloyl-D-alanyl-D-alanine + UDP + H(+). The protein operates within cell wall biogenesis; peptidoglycan biosynthesis. Its function is as follows. Cell wall formation. Catalyzes the transfer of a GlcNAc subunit on undecaprenyl-pyrophosphoryl-MurNAc-pentapeptide (lipid intermediate I) to form undecaprenyl-pyrophosphoryl-MurNAc-(pentapeptide)GlcNAc (lipid intermediate II). The chain is UDP-N-acetylglucosamine--N-acetylmuramyl-(pentapeptide) pyrophosphoryl-undecaprenol N-acetylglucosamine transferase from Chlamydia trachomatis serovar A (strain ATCC VR-571B / DSM 19440 / HAR-13).